The following is a 1152-amino-acid chain: Autotransporter adhesin BpaC (1152 aa).

An N-terminal signal peptide occupies residues 1-71; that stretch reads MNRIFKSIWC…PFAEEAMAAN (71 aa). The interval 72–1061 is surface exposed passenger domain; sequence NAGVCLTYNG…VGQLNSAVSG (990 aa). Disordered stretches follow at residues 420–886 and 900–949; these read GLQG…AGAT and TATG…ESAA. The segment covering 427 to 442 has biased composition (polar residues); sequence ANTGTASGDNSTASGD. The span at 443–504 shows a compositional bias: low complexity; sequence NATASGTNST…ANGTNSTASG (62 aa). Residues 505 to 519 show a composition bias toward polar residues; sequence DNSTASGTNASATGE. Low complexity predominate over residues 520-588; that stretch reads NSTATGTDST…ANGTNSTASG (69 aa). Polar residues predominate over residues 589 to 603; that stretch reads DNSTASGTNASATGE. Residues 604-630 are compositionally biased toward low complexity; it reads NSTATGTDSTASGSNSTANGTNSTASG. Residues 631–645 are compositionally biased toward polar residues; the sequence is DNSTASGTNASATGE. A compositionally biased stretch (low complexity) spans 646–672; that stretch reads NSTATGTDSTASGSNSTANGTNSTASG. Positions 673 to 687 are enriched in polar residues; sequence DNSTASGTNASATGE. A compositionally biased stretch (low complexity) spans 688–714; it reads NSTATGTDSTASGSNSTANGTNSTASG. Over residues 715 to 729 the composition is skewed to polar residues; that stretch reads DNSTASGTNASATGE. The span at 730-756 shows a compositional bias: low complexity; it reads NSTATGTDSTASGSNSTANGANSTASG. The span at 757–771 shows a compositional bias: polar residues; that stretch reads DNSTASGTNASATGE. 2 stretches are compositionally biased toward low complexity: residues 772–840 and 848–886; these read NSTA…TASG and TNASATGENSTATGTASTASGSNSTANGANSTASGAGAT. The segment at 1062-1099 is outer membrane translocation of the passenger domain; the sequence is IRNQMDGMQGQIDTLARDAYSGIAAATALTMIPDVDPG. Residues 1100 to 1152 form a translocator domain region; the sequence is KTLAVGIGTANFKGYQASALGATARITQNLKVKTGVSYSGSNYVWGAGMSYQW.

This sequence belongs to the autotransporter-2 (AT-2) (TC 1.B.40) family. In terms of assembly, homotrimer.

It is found in the cell surface. The protein localises to the cell outer membrane. In terms of biological role, involved in virulence. Mediates adherence to human respiratory epithelial cells. This Burkholderia pseudomallei (strain 1026b) protein is Autotransporter adhesin BpaC.